A 375-amino-acid polypeptide reads, in one-letter code: CLIP domain-containing serine protease B14 (375 aa).

The first 24 residues, 1-24, serve as a signal peptide directing secretion; that stretch reads MYSRRYVACGLLCLLVIAIDQGHG. The region spanning 29 to 83 is the Clip domain; it reads PCTTPNGTAGRCVRVRECGYVLDLLRKDLFAHSDTVHLEGLQCGTRPDGGALVCC. Disulfide bonds link cysteine 30–cysteine 82, cysteine 40–cysteine 71, and cysteine 46–cysteine 83. A glycan (N-linked (GlcNAc...) asparagine) is linked at asparagine 34. The region spanning 101–370 is the Peptidase S1 domain; sequence IIGGNDTELG…YMGWLEREMF (270 aa). N-linked (GlcNAc...) asparagine glycosylation occurs at asparagine 105. A disulfide bridge connects residues cysteine 131 and cysteine 147. Active-site charge relay system residues include histidine 146 and aspartate 213. A glycan (N-linked (GlcNAc...) asparagine) is linked at asparagine 238. Intrachain disulfides connect cysteine 289/cysteine 307 and cysteine 317/cysteine 346. Residue serine 321 is the Charge relay system of the active site. Asparagine 357 carries N-linked (GlcNAc...) asparagine glycosylation.

It belongs to the peptidase S1 family. CLIP subfamily. N-glycosylated. In terms of processing, proteolytically cleaved. Expressed by a subpopulation of hemocytes.

It is found in the secreted. Serine protease. Plays a role in innate immunity against infections by parasite P.berghei and by Gram-negative bacteria such as E.coli. In response to P.berghei infection, contributes to the clearing of parasite ookinetes independent of melanization, an innate immune response which consists in the deposition of melanin pigments on invading pathogens and parasites. May play a role in non-septic wound healing. The polypeptide is CLIP domain-containing serine protease B14 (Anopheles gambiae (African malaria mosquito)).